The sequence spans 430 residues: MPYIVDVYAREVLDSRGNPTVEVEVYTESGAFGRALVPSGASTGEYEAVELRDGDKDRYLGKGVLTAVNNVNEIIAPELIGFDVTEQVSIDKLLIELDGTENKGKLGANAILGVSMAVARAAADFLQIPLYQYLGGFNSKTLPVPMMNIVNGGEHADNNVDIQEFMIMPVGAENFREALRMGAQIFHSLKSVLKEKGLNTAVGDEGGFAPNLGSNEEALQTIVEAIEKAGFKPGEEVKLAMDAASSEFYNKEDGKYHLAGEGVVKTSAEMVDWYEELTSKYPIISIEDGLDENDWEGHKLLTERLGSKVQLVGDDLFVTNTKKLAEGIKNGVGNSILIKVNQIGTLTETFDAIEMAKRAGYTAVISHRSGETEDSTIADIAVATNAGQIKTGAPSRTDRVAKYNQLLRIEDQLAETAQYHGIQSFYNLNK.

Gln-163 is a (2R)-2-phosphoglycerate binding site. Glu-205 functions as the Proton donor in the catalytic mechanism. Mg(2+) contacts are provided by Asp-242, Glu-287, and Asp-314. Residues Lys-339, Arg-368, Ser-369, and Lys-390 each coordinate (2R)-2-phosphoglycerate. Catalysis depends on Lys-339, which acts as the Proton acceptor.

This sequence belongs to the enolase family. Requires Mg(2+) as cofactor.

The protein resides in the cytoplasm. Its subcellular location is the secreted. It localises to the cell surface. The catalysed reaction is (2R)-2-phosphoglycerate = phosphoenolpyruvate + H2O. It participates in carbohydrate degradation; glycolysis; pyruvate from D-glyceraldehyde 3-phosphate: step 4/5. Catalyzes the reversible conversion of 2-phosphoglycerate (2-PG) into phosphoenolpyruvate (PEP). It is essential for the degradation of carbohydrates via glycolysis. This is Enolase from Bacillus licheniformis (strain ATCC 14580 / DSM 13 / JCM 2505 / CCUG 7422 / NBRC 12200 / NCIMB 9375 / NCTC 10341 / NRRL NRS-1264 / Gibson 46).